We begin with the raw amino-acid sequence, 870 residues long: Serine protease DegP homolog (870 aa).

The signal sequence occupies residues 1-29 (MDIIFCTPTYCKIMLMIIMLISLRTRCDT). The disordered stretch occupies residues 128–151 (KNPLNDNFKNPKLRKHSPNNKKNK). Residues 138-151 (PKLRKHSPNNKKNK) are compositionally biased toward basic residues. Catalysis depends on charge relay system residues His-328, Asp-359, and Ser-437.

Belongs to the peptidase S1C family. In terms of assembly, oligomer; may form trimers or hexamers. Forms a complex at least composed of DegP, ENO and HSP70.

The protein resides in the cytoplasm. It is found in the parasitophorous vacuole. Its subcellular location is the host cell membrane. The protein localises to the host cytoplasm. In terms of biological role, serine protease which also acts as a protein chaperone. Plays a role in the parasite development in host erythrocytes possibly by protecting it against thermal and oxidative stresses. This Plasmodium falciparum (isolate 3D7) protein is Serine protease DegP homolog.